A 540-amino-acid chain; its full sequence is Chaperonin GroEL 3 (540 aa).

Residues 30–33 (TLGP), K51, 87–91 (DGTTT), G415, 479–481 (NAA), and D495 each bind ATP.

Belongs to the chaperonin (HSP60) family. As to quaternary structure, forms a cylinder of 14 subunits composed of two heptameric rings stacked back-to-back. Interacts with the co-chaperonin GroES.

It localises to the cytoplasm. It carries out the reaction ATP + H2O + a folded polypeptide = ADP + phosphate + an unfolded polypeptide.. Functionally, together with its co-chaperonin GroES, plays an essential role in assisting protein folding. The GroEL-GroES system forms a nano-cage that allows encapsulation of the non-native substrate proteins and provides a physical environment optimized to promote and accelerate protein folding. This is Chaperonin GroEL 3 from Burkholderia cenocepacia (strain HI2424).